Consider the following 367-residue polypeptide: Putative F-box/kelch-repeat protein At4g39600 (367 aa).

The F-box domain occupies A11 to R57. Kelch repeat units follow at residues H127–K171 and M172–I216.

The chain is Putative F-box/kelch-repeat protein At4g39600 from Arabidopsis thaliana (Mouse-ear cress).